The sequence spans 276 residues: Digeranylgeranylglyceryl phosphate synthase (276 aa).

5 consecutive transmembrane segments (helical) span residues valine 14–valine 34, valine 90–isoleucine 110, phenylalanine 144–alanine 164, alanine 200–leucine 220, and valine 221–valine 241.

This sequence belongs to the UbiA prenyltransferase family. DGGGP synthase subfamily. The cofactor is Mg(2+).

It is found in the cell membrane. The enzyme catalyses sn-3-O-(geranylgeranyl)glycerol 1-phosphate + (2E,6E,10E)-geranylgeranyl diphosphate = 2,3-bis-O-(geranylgeranyl)-sn-glycerol 1-phosphate + diphosphate. Its pathway is membrane lipid metabolism; glycerophospholipid metabolism. Prenyltransferase that catalyzes the transfer of the geranylgeranyl moiety of geranylgeranyl diphosphate (GGPP) to the C2 hydroxyl of (S)-3-O-geranylgeranylglyceryl phosphate (GGGP). This reaction is the second ether-bond-formation step in the biosynthesis of archaeal membrane lipids. The chain is Digeranylgeranylglyceryl phosphate synthase from Halobacterium salinarum (strain ATCC 29341 / DSM 671 / R1).